We begin with the raw amino-acid sequence, 1577 residues long: Disco-interacting protein 2 homolog B-A (1577 aa).

The 118-residue stretch at 7 to 124 (DLAALPKEVR…PMPTKRRSAF (118 aa)) folds into the DMAP1-binding domain. Disordered regions lie at residues 109–148 (EEKM…GSLR), 173–204 (VQGS…QGQT), 217–239 (DTNS…DRNS), and 253–273 (SRGQ…AHSR). A compositionally biased stretch (polar residues) spans 124-140 (FVQSPAENCTPPDTSSA). Over residues 176 to 187 (SSTSSSASSTLS) the composition is skewed to low complexity. Positions 217-236 (DTNSSSGSVPPDVTSTAPQD) are enriched in polar residues.

Belongs to the DIP2 family.

It is found in the cell projection. The protein resides in the dendrite. The protein localises to the axon. Its subcellular location is the perikaryon. Functionally, negatively regulates axonal outgrowth and is essential for normal synaptic transmission. Not required for regulation of axon polarity. Promotes acetylation of alpha-tubulin. The polypeptide is Disco-interacting protein 2 homolog B-A (dip2ba) (Danio rerio (Zebrafish)).